The chain runs to 356 residues: DNA-directed RNA polymerase subunit alpha (356 aa).

The tract at residues 1 to 230 (MNLHRISSEP…DLLKPLLKVE (230 aa)) is alpha N-terminal domain (alpha-NTD). The tract at residues 267 to 356 (IDQPLLPADS…IRKSYGHILG (90 aa)) is alpha C-terminal domain (alpha-CTD).

It belongs to the RNA polymerase alpha chain family. In plastids the minimal PEP RNA polymerase catalytic core is composed of four subunits: alpha, beta, beta', and beta''. When a (nuclear-encoded) sigma factor is associated with the core the holoenzyme is formed, which can initiate transcription.

It is found in the plastid. It localises to the chloroplast. The enzyme catalyses RNA(n) + a ribonucleoside 5'-triphosphate = RNA(n+1) + diphosphate. In terms of biological role, DNA-dependent RNA polymerase catalyzes the transcription of DNA into RNA using the four ribonucleoside triphosphates as substrates. In Zygnema circumcarinatum (Green alga), this protein is DNA-directed RNA polymerase subunit alpha.